The chain runs to 237 residues: MAIETFQRGFVLHRKPYSETSLLVDLFTEETGRLTVLAKGARAKRSAWKGVLQPFTPLLLRWSGKGALKTLTKAEPAAIALPLQQTALFSGFYVNELLCRVIEAETPNGELFQDYLHCLTRLASEDGVEPALRTFEFQLLTMLGYGVDFTHCAGSGEPVDEAMTYRYREEKGFTASLIKDNATFYGRDLLAFEARDFRDPAVRSAAKRFTRMALKPYLGNKPLKSRELFAHNILFLK.

This sequence belongs to the RecO family.

Functionally, involved in DNA repair and RecF pathway recombination. This chain is DNA repair protein RecO, found in Actinobacillus succinogenes (strain ATCC 55618 / DSM 22257 / CCUG 43843 / 130Z).